Here is a 415-residue protein sequence, read N- to C-terminus: Casein kinase 1-like protein 3 (415 aa).

In terms of domain architecture, Protein kinase spans 9-277 (YKLGRKIGGG…FLKRLFRDLF (269 aa)). ATP contacts are provided by residues 15–23 (IGGGSFGEI) and K38. D128 serves as the catalytic Proton acceptor. Composition is skewed to polar residues over residues 303 to 314 (NQSQAVPGSSNP) and 373 to 415 (NMPS…SPEK). Disordered stretches follow at residues 303–330 (NQSQAVPGSSNPRAMPVDTSNHRGGPNI) and 344–415 (NAIG…SPEK).

It belongs to the protein kinase superfamily. CK1 Ser/Thr protein kinase family. Casein kinase I subfamily. Post-translationally, slightly autophosphorylated. As to expression, expressed in seedlings, stems, leaves and flowers.

The protein localises to the cytoplasm. It localises to the nucleus. The catalysed reaction is L-seryl-[protein] + ATP = O-phospho-L-seryl-[protein] + ADP + H(+). The enzyme catalyses L-threonyl-[protein] + ATP = O-phospho-L-threonyl-[protein] + ADP + H(+). Functionally, protein kinase involved in blue light responses (e.g. hypocotyl elongation and flowering) by phosphorylating CRY2 to reduce its stability. The sequence is that of Casein kinase 1-like protein 3 from Arabidopsis thaliana (Mouse-ear cress).